We begin with the raw amino-acid sequence, 203 residues long: Putative zinc finger protein 876 (203 aa).

4 consecutive C2H2-type zinc fingers follow at residues 63 to 85 (YTCEECGKAFYRSSHLTEHKNIH), 91 to 113 (YKCEECGNAFYRSSHLTKHKRIH), 119 to 141 (YKCEECGKAFRQSSALNEHKKIH), and 147 to 169 (YKCKECGKAFRWSRSLNEHTNIH). The segment at 175–197 (YTCEECGKDFTWSSTLTVHQRIQ) adopts a C2H2-type 5; degenerate zinc-finger fold.

The protein belongs to the krueppel C2H2-type zinc-finger protein family.

The protein resides in the nucleus. In terms of biological role, may be involved in transcriptional regulation. The protein is Putative zinc finger protein 876 (ZNF876P) of Homo sapiens (Human).